Consider the following 297-residue polypeptide: Formamidopyrimidine-DNA glycosylase (297 aa).

Catalysis depends on Pro2, which acts as the Schiff-base intermediate with DNA. The active-site Proton donor is Glu3. The active-site Proton donor; for beta-elimination activity is the Lys58. The DNA site is built by His106, Arg125, and Arg168. The FPG-type zinc-finger motif lies at 259-295 (RVYDREGLACTARGCRGVVRRVVQSGRSTFFCEVCQP). The Proton donor; for delta-elimination activity role is filled by Arg285.

It belongs to the FPG family. Monomer. The cofactor is Zn(2+).

It catalyses the reaction Hydrolysis of DNA containing ring-opened 7-methylguanine residues, releasing 2,6-diamino-4-hydroxy-5-(N-methyl)formamidopyrimidine.. The catalysed reaction is 2'-deoxyribonucleotide-(2'-deoxyribose 5'-phosphate)-2'-deoxyribonucleotide-DNA = a 3'-end 2'-deoxyribonucleotide-(2,3-dehydro-2,3-deoxyribose 5'-phosphate)-DNA + a 5'-end 5'-phospho-2'-deoxyribonucleoside-DNA + H(+). Functionally, involved in base excision repair of DNA damaged by oxidation or by mutagenic agents. Acts as a DNA glycosylase that recognizes and removes damaged bases. Has a preference for oxidized purines, such as 7,8-dihydro-8-oxoguanine (8-oxoG). Has AP (apurinic/apyrimidinic) lyase activity and introduces nicks in the DNA strand. Cleaves the DNA backbone by beta-delta elimination to generate a single-strand break at the site of the removed base with both 3'- and 5'-phosphates. The sequence is that of Formamidopyrimidine-DNA glycosylase from Methylobacterium nodulans (strain LMG 21967 / CNCM I-2342 / ORS 2060).